We begin with the raw amino-acid sequence, 382 residues long: Na(+)/H(+) antiporter NhaA 2 (382 aa).

The next 10 helical transmembrane spans lie at 11-31 (FSVP…LDPA), 45-65 (LSFH…IAAV), 91-111 (LGGV…VGLP), 116-136 (GWGI…RMVF), 145-165 (YLLL…ALFY), 171-191 (PVVA…WGLG), 197-214 (SYWP…IGLH), 287-307 (WLVL…FGLL), 324-344 (LLVA…VSGS), and 353-373 (AAAK…MLLG).

This sequence belongs to the NhaA Na(+)/H(+) (TC 2.A.33) antiporter family.

Its subcellular location is the cell inner membrane. The catalysed reaction is Na(+)(in) + 2 H(+)(out) = Na(+)(out) + 2 H(+)(in). Functionally, na(+)/H(+) antiporter that extrudes sodium in exchange for external protons. The polypeptide is Na(+)/H(+) antiporter NhaA 2 (Pelobacter propionicus (strain DSM 2379 / NBRC 103807 / OttBd1)).